A 443-amino-acid chain; its full sequence is MDTLASLYTKHLATLQQRARTILERHQLDGLLIHSGEPIARFLDDQDYPFKINPYFKAWVPVTQVPNCWLWIDGVNKPKLWFYSPLDYWHSVSPLPQAFWTEQVEMTAQRHADDIAALLPAARGNVAYIGPNAERARSLGIDEAHQNPQAVLNFLHYHRAYKSEYEQACMREAQKIAVDGHQAALEAFRAGMSEFDINLAYLSATGQGENDVPYDNIIALNRHAAVLHYTHLERRAPSEMHSFLIDAGAEFHGYAADLTRTYAANGQSDFAALVAEVNQAQQALIATLQTGVRYTDYNLQFHQRLAAILRHHHILTGISDEAAVAQGLTTPFLPHGLGHPLGLQVHDVAGFMQDELGTQMAAPDRYPYLRCTRIMEPGMVMTIEPGLYFIDTLLAPWLEGEFGQHFNRGRIDALRPYGGIRIEDNVIFHAHGVENMTRDLHLA.

The Mn(2+) site is built by D246, D257, H339, E384, and E423.

It belongs to the peptidase M24B family. Bacterial-type prolidase subfamily. It depends on Mn(2+) as a cofactor.

The catalysed reaction is Xaa-L-Pro dipeptide + H2O = an L-alpha-amino acid + L-proline. Functionally, splits dipeptides with a prolyl residue in the C-terminal position. In Edwardsiella ictaluri (strain 93-146), this protein is Xaa-Pro dipeptidase.